The sequence spans 226 residues: Glutathione peroxidase 3 (226 aa).

The signal sequence occupies residues M1–G24. Residue U73 is part of the active site. Position 73 (U73) is a non-standard amino acid, selenocysteine.

Belongs to the glutathione peroxidase family. Homotetramer. In terms of tissue distribution, expressed intensively in the kidney and adrenal gland, and weakly in the cerebellum, heart, and lung. Secreted in plasma.

It localises to the secreted. It carries out the reaction 2 glutathione + H2O2 = glutathione disulfide + 2 H2O. The catalysed reaction is tert-butyl hydroperoxide + 2 glutathione = tert-butanol + glutathione disulfide + H2O. Functionally, protects cells and enzymes from oxidative damage, by catalyzing the reduction of hydrogen peroxide, lipid peroxides and organic hydroperoxide, by glutathione. In Macaca fuscata fuscata (Japanese macaque), this protein is Glutathione peroxidase 3.